The following is a 1049-amino-acid chain: DEAD-box ATP-dependent RNA helicase 42 (1049 aa).

2 disordered regions span residues 1–279 (MGSS…DEID) and 299–358 (MPAA…DDEE). Basic and acidic residues predominate over residues 64 to 106 (KERDREERKAREREEREKEKERERARRREERDREERSRRREAA). Residues 118–131 (RKRRRRSSHHHHHH) are compositionally biased toward basic residues. Basic and acidic residues-rich tracts occupy residues 161–170 (KKEEEQKQLD) and 181–199 (KEWQ…REQE). A compositionally biased stretch (low complexity) spans 201-214 (AGVGTSAAAAAAPA). Residues 229-239 (DGEESDEEGNQ) show a composition bias toward acidic residues. The segment covering 262-272 (NGGDNANGANA) has biased composition (low complexity). Residues 304 to 313 (VDDKNDKSAK) show a composition bias toward basic and acidic residues. The segment covering 335 to 358 (EDSDSDYADDEDDEGGSEDEDDEE) has biased composition (acidic residues). The Q motif motif lies at 424–452 (KTWVQSGLTSKLLDTIKKLGFEKPMSIQA). In terms of domain architecture, Helicase ATP-binding spans 455–633 (LPIIMSGRDC…RKVLTKPVEI (179 aa)). 468–475 (AKTGSGKT) contacts ATP. A DEAD box motif is present at residues 581–584 (DEAD). The Helicase C-terminal domain maps to 644-805 (DITQLVEVRP…AVPEDLKGLA (162 aa)). Residues 816-868 (TEQAHGTGYGGSGFKFNEEEDEARKSAKKAQAREYGYEEDKSDSDSDEEGGVR) are disordered. Positions 855-864 (DKSDSDSDEE) are enriched in acidic residues. The stretch at 1012–1037 (TELSVKKAKAELKRVLEDCANHALNL) forms a coiled coil.

It belongs to the DEAD box helicase family. DDX46/PRP5 subfamily.

It carries out the reaction ATP + H2O = ADP + phosphate + H(+). This Oryza sativa subsp. japonica (Rice) protein is DEAD-box ATP-dependent RNA helicase 42.